Reading from the N-terminus, the 228-residue chain is MANHSQLGFQDASSPIMEELVEFHDHALIVALAICSLVLYLLAHMLMEKLSSNAVDAQEVELIWTILPAIVLVLLALPSLQILYMMDEIDEPDLTLKAIGHQWYWSYEYTDFKDLSFDSYMIPTTDLPNGHFRLLEVDHRVVVPMESPIRVIITAGDVLHSWAVPTLGVKTDAIPGRLNQTSFIATRPGVFYGQCSEICGANHSYMPIVVESTPLPYFETWSSLLSAS.

Topologically, residues Met-1–Ser-14 are mitochondrial intermembrane. Residues Pro-15 to Met-45 form a helical membrane-spanning segment. Over Leu-46–Gln-58 the chain is Mitochondrial matrix. The chain crosses the membrane as a helical span at residues Glu-59–Met-86. Residues Asp-87–Ser-228 lie on the Mitochondrial intermembrane side of the membrane. Cu cation is bound by residues His-160, Cys-195, Glu-197, Cys-199, His-203, and Met-206. Glu-197 contributes to the Mg(2+) binding site.

The protein belongs to the cytochrome c oxidase subunit 2 family. As to quaternary structure, component of the cytochrome c oxidase (complex IV, CIV), a multisubunit enzyme composed of 14 subunits. The complex is composed of a catalytic core of 3 subunits MT-CO1, MT-CO2 and MT-CO3, encoded in the mitochondrial DNA, and 11 supernumerary subunits COX4I, COX5A, COX5B, COX6A, COX6B, COX6C, COX7A, COX7B, COX7C, COX8 and NDUFA4, which are encoded in the nuclear genome. The complex exists as a monomer or a dimer and forms supercomplexes (SCs) in the inner mitochondrial membrane with NADH-ubiquinone oxidoreductase (complex I, CI) and ubiquinol-cytochrome c oxidoreductase (cytochrome b-c1 complex, complex III, CIII), resulting in different assemblies (supercomplex SCI(1)III(2)IV(1) and megacomplex MCI(2)III(2)IV(2)). Found in a complex with TMEM177, COA6, COX18, COX20, SCO1 and SCO2. Interacts with TMEM177 in a COX20-dependent manner. Interacts with COX20. Interacts with COX16. It depends on Cu cation as a cofactor.

Its subcellular location is the mitochondrion inner membrane. The catalysed reaction is 4 Fe(II)-[cytochrome c] + O2 + 8 H(+)(in) = 4 Fe(III)-[cytochrome c] + 2 H2O + 4 H(+)(out). In terms of biological role, component of the cytochrome c oxidase, the last enzyme in the mitochondrial electron transport chain which drives oxidative phosphorylation. The respiratory chain contains 3 multisubunit complexes succinate dehydrogenase (complex II, CII), ubiquinol-cytochrome c oxidoreductase (cytochrome b-c1 complex, complex III, CIII) and cytochrome c oxidase (complex IV, CIV), that cooperate to transfer electrons derived from NADH and succinate to molecular oxygen, creating an electrochemical gradient over the inner membrane that drives transmembrane transport and the ATP synthase. Cytochrome c oxidase is the component of the respiratory chain that catalyzes the reduction of oxygen to water. Electrons originating from reduced cytochrome c in the intermembrane space (IMS) are transferred via the dinuclear copper A center (CU(A)) of subunit 2 and heme A of subunit 1 to the active site in subunit 1, a binuclear center (BNC) formed by heme A3 and copper B (CU(B)). The BNC reduces molecular oxygen to 2 water molecules using 4 electrons from cytochrome c in the IMS and 4 protons from the mitochondrial matrix. The sequence is that of Cytochrome c oxidase subunit 2 (MT-CO2) from Cairina moschata (Muscovy duck).